A 464-amino-acid polypeptide reads, in one-letter code: Siroheme synthase (464 aa).

The precorrin-2 dehydrogenase /sirohydrochlorin ferrochelatase stretch occupies residues 1–203 (MEFLPLFHNL…GQGAEAERLL (203 aa)). Residues 22 to 23 (EI) and 43 to 44 (PE) each bind NAD(+). Ser-128 carries the post-translational modification Phosphoserine. Positions 216-464 (GEVYLVGAGP…AWFEGAQATL (249 aa)) are uroporphyrinogen-III C-methyltransferase. Position 225 (Pro-225) interacts with S-adenosyl-L-methionine. Asp-248 (proton acceptor) is an active-site residue. The Proton donor role is filled by Lys-270. S-adenosyl-L-methionine is bound by residues 301 to 303 (GGD), Ile-306, 331 to 332 (TA), Met-383, and Gly-412.

It in the N-terminal section; belongs to the precorrin-2 dehydrogenase / sirohydrochlorin ferrochelatase family. This sequence in the C-terminal section; belongs to the precorrin methyltransferase family.

The enzyme catalyses uroporphyrinogen III + 2 S-adenosyl-L-methionine = precorrin-2 + 2 S-adenosyl-L-homocysteine + H(+). The catalysed reaction is precorrin-2 + NAD(+) = sirohydrochlorin + NADH + 2 H(+). It catalyses the reaction siroheme + 2 H(+) = sirohydrochlorin + Fe(2+). The protein operates within cofactor biosynthesis; adenosylcobalamin biosynthesis; precorrin-2 from uroporphyrinogen III: step 1/1. It functions in the pathway cofactor biosynthesis; adenosylcobalamin biosynthesis; sirohydrochlorin from precorrin-2: step 1/1. It participates in porphyrin-containing compound metabolism; siroheme biosynthesis; precorrin-2 from uroporphyrinogen III: step 1/1. Its pathway is porphyrin-containing compound metabolism; siroheme biosynthesis; siroheme from sirohydrochlorin: step 1/1. The protein operates within porphyrin-containing compound metabolism; siroheme biosynthesis; sirohydrochlorin from precorrin-2: step 1/1. Its function is as follows. Multifunctional enzyme that catalyzes the SAM-dependent methylations of uroporphyrinogen III at position C-2 and C-7 to form precorrin-2 via precorrin-1. Then it catalyzes the NAD-dependent ring dehydrogenation of precorrin-2 to yield sirohydrochlorin. Finally, it catalyzes the ferrochelation of sirohydrochlorin to yield siroheme. The protein is Siroheme synthase of Pseudomonas syringae pv. tomato (strain ATCC BAA-871 / DC3000).